The following is a 354-amino-acid chain: Peptide chain release factor 1 (354 aa).

An N5-methylglutamine modification is found at Q230.

This sequence belongs to the prokaryotic/mitochondrial release factor family. In terms of processing, methylated by PrmC. Methylation increases the termination efficiency of RF1.

It is found in the cytoplasm. Its function is as follows. Peptide chain release factor 1 directs the termination of translation in response to the peptide chain termination codons UAG and UAA. The polypeptide is Peptide chain release factor 1 (Novosphingobium aromaticivorans (strain ATCC 700278 / DSM 12444 / CCUG 56034 / CIP 105152 / NBRC 16084 / F199)).